The sequence spans 332 residues: N-acetyl-gamma-glutamyl-phosphate reductase (332 aa).

The active site involves Cys144.

It belongs to the NAGSA dehydrogenase family. Type 1 subfamily.

It is found in the cytoplasm. It carries out the reaction N-acetyl-L-glutamate 5-semialdehyde + phosphate + NADP(+) = N-acetyl-L-glutamyl 5-phosphate + NADPH + H(+). It participates in amino-acid biosynthesis; L-arginine biosynthesis; N(2)-acetyl-L-ornithine from L-glutamate: step 3/4. In terms of biological role, catalyzes the NADPH-dependent reduction of N-acetyl-5-glutamyl phosphate to yield N-acetyl-L-glutamate 5-semialdehyde. In Archaeoglobus fulgidus (strain ATCC 49558 / DSM 4304 / JCM 9628 / NBRC 100126 / VC-16), this protein is N-acetyl-gamma-glutamyl-phosphate reductase.